A 492-amino-acid chain; its full sequence is Transmembrane protein 39B (492 aa).

The interval 1 to 53 is disordered; that stretch reads MGGRRGPNRTSYYRNPLCEPGSSGASGGGHSSSASVSSVRSRSRTTSGTGLSS. N-linked (GlcNAc...) asparagine glycosylation occurs at Asn-8. The span at 31–53 shows a compositional bias: low complexity; the sequence is SSSASVSSVRSRSRTTSGTGLSS. Transmembrane regions (helical) follow at residues 77–97, 115–135, 153–175, 185–205, 288–308, 322–342, 421–441, and 447–467; these read SILFELQLFFCQLIALFVHYI, TSLNFHLIDFNLLMVTAIVLG, SLFRSILLFLTRFTVLTATGWSL, TYSFLNLLFLCYPFGMYIPFL, EVLVSSMLSAYYVAFVPVWFV, LFLLVSISTSVILMQHLLPAS, ILNILLLLEGAVIVYQLYSLM, and HQTISLALILFSNYYAFFKLL.

It belongs to the TMEM39 family.

The protein localises to the endoplasmic reticulum membrane. In terms of biological role, may protect the cells against DNA damage caused by exposure to the cold-warming stress and facilitates tissue damage repair during the recovery phase. The polypeptide is Transmembrane protein 39B (Mus musculus (Mouse)).